The following is a 181-amino-acid chain: TATA-box-binding protein (181 aa).

2 consecutive repeat copies span residues 8-84 (IENI…VDLM) and 99-175 (IQNI…YDRL).

The protein belongs to the TBP family.

In terms of biological role, general factor that plays a role in the activation of archaeal genes transcribed by RNA polymerase. Binds specifically to the TATA box promoter element which lies close to the position of transcription initiation. The protein is TATA-box-binding protein of Methanobrevibacter smithii (strain ATCC 35061 / DSM 861 / OCM 144 / PS).